Reading from the N-terminus, the 921-residue chain is Protein translocase subunit SecA (921 aa).

Residues Q86, 104–108 (GEGKT), and D497 contribute to the ATP site. Over residues 829-838 (QQAPQQQPQQ) the composition is skewed to low complexity. The segment at 829–921 (QQAPQQQPQQ…CHGAIETQKA (93 aa)) is disordered. Residues 839–855 (VAPPPRPQPPQPAPQPP) show a composition bias toward pro residues. Residues C901, C903, C912, and H913 each contribute to the Zn(2+) site.

The protein belongs to the SecA family. As to quaternary structure, monomer and homodimer. Part of the essential Sec protein translocation apparatus which comprises SecA, SecYEG and auxiliary proteins SecDF-YajC and YidC. Zn(2+) is required as a cofactor.

The protein localises to the cell inner membrane. It localises to the cytoplasm. The catalysed reaction is ATP + H2O + cellular proteinSide 1 = ADP + phosphate + cellular proteinSide 2.. Its function is as follows. Part of the Sec protein translocase complex. Interacts with the SecYEG preprotein conducting channel. Has a central role in coupling the hydrolysis of ATP to the transfer of proteins into and across the cell membrane, serving both as a receptor for the preprotein-SecB complex and as an ATP-driven molecular motor driving the stepwise translocation of polypeptide chains across the membrane. The chain is Protein translocase subunit SecA from Hyphomonas neptunium (strain ATCC 15444).